The primary structure comprises 168 residues: G/U mismatch-specific DNA glycosylase (168 aa).

It belongs to the uracil-DNA glycosylase (UDG) superfamily. TDG/mug family. Binds DNA as a monomer.

It is found in the cytoplasm. The enzyme catalyses Specifically hydrolyzes mismatched double-stranded DNA and polynucleotides, releasing free uracil.. Excises ethenocytosine and uracil, which can arise by alkylation or deamination of cytosine, respectively, from the corresponding mispairs with guanine in ds-DNA. It is capable of hydrolyzing the carbon-nitrogen bond between the sugar-phosphate backbone of the DNA and the mispaired base. The complementary strand guanine functions in substrate recognition. Required for DNA damage lesion repair in stationary-phase cells. The protein is G/U mismatch-specific DNA glycosylase of Klebsiella pneumoniae (strain 342).